A 317-amino-acid chain; its full sequence is Melanocyte-stimulating hormone receptor (317 aa).

Topologically, residues 1 to 37 (MPVLGSQRRLLGSLNCTPPATFPLTLAPNRTGPQCLE) are extracellular. The N-linked (GlcNAc...) asparagine glycan is linked to N29. A helical transmembrane segment spans residues 38–63 (VAIPDGLFLSLGLVSLVENVLVVAAI). The Cytoplasmic portion of the chain corresponds to 64–72 (AKNRNLQSP). A helical transmembrane segment spans residues 73 to 93 (MYYFICCLAMSDLLVSVSNVL). Residues 94–118 (ETAVMLLLEAGALAARAAVVQQLDN) lie on the Extracellular side of the membrane. The helical transmembrane segment at 119 to 140 (VIDVLICGSMVSSLCFLGAIAV) threads the bilayer. At 141-163 (DRYISIFYALRYHSVVTLPRAWR) the chain is on the cytoplasmic side. The helical transmembrane segment at 164–183 (IIAAIWVASILTSLLFITYY) threads the bilayer. Topologically, residues 184–191 (NHTVVLLC) are extracellular. A helical membrane pass occupies residues 192–211 (LVGFFIAMLALMAVLYVHML). At 212–240 (ARACQHARGIARLQKRQRPIHQGFGLKGA) the chain is on the cytoplasmic side. Residues 241–266 (ATLTILLGVFFLCWGPFFLHLSLIVL) form a helical membrane-spanning segment. The Extracellular portion of the chain corresponds to 267 to 279 (CPQHPTCGCIFKN). Residues 280–300 (FNLFLALIICNAIVDPLIYAF) traverse the membrane as a helical segment. Residues 301-317 (RSQELRKTLQEVLQCSW) lie on the Cytoplasmic side of the membrane. C315 is lipidated: S-palmitoyl cysteine.

The protein belongs to the G-protein coupled receptor 1 family. In terms of assembly, interacts with MGRN1, but does not undergo MGRN1-mediated ubiquitination; this interaction competes with GNAS-binding and thus inhibits agonist-induced cAMP production. Interacts with OPN3; the interaction results in a decrease in MC1R-mediated cAMP signaling and ultimately a decrease in melanin production in melanocytes.

The protein resides in the cell membrane. Its function is as follows. Receptor for MSH (alpha, beta and gamma) and ACTH. The activity of this receptor is mediated by G proteins which activate adenylate cyclase. Mediates melanogenesis, the production of eumelanin (black/brown) and phaeomelanin (red/yellow), via regulation of cAMP signaling in melanocytes. In Cervus elaphus (Red deer), this protein is Melanocyte-stimulating hormone receptor (MC1R).